Reading from the N-terminus, the 346-residue chain is Heparan sulfate glucosamine 3-O-sulfotransferase 5 (346 aa).

Over 1–12 the chain is Cytoplasmic; that stretch reads MLFKQQAWLRQK. A helical; Signal-anchor for type II membrane protein transmembrane segment spans residues 13 to 32; it reads LLVLGSLAVGSLLYLVARVG. Residues 33 to 346 are Lumenal-facing; the sequence is SLDRLQPICP…QITGRTLNWP (314 aa). Residue 100–104 coordinates 3'-phosphoadenylyl sulfate; it reads KGGTR. Substrate contacts are provided by residues 122–128 and 155–158; these read EIHFFDN and KSPA. 2 residues coordinate 3'-phosphoadenylyl sulfate: Arg-183 and Ser-191. 226-227 is a substrate binding site; sequence YK. An N-linked (GlcNAc...) asparagine glycan is attached at Asn-287. Tyr-293 is a binding site for 3'-phosphoadenylyl sulfate. Cys-294 and Cys-304 form a disulfide bridge. Residue 309-313 coordinates 3'-phosphoadenylyl sulfate; the sequence is KGRIH.

It belongs to the sulfotransferase 1 family. Highly expressed in skeletal muscle and fetal brain, and also found in adult brain, spinal cord, cerebellum and colon.

Its subcellular location is the golgi apparatus membrane. It catalyses the reaction alpha-D-glucosaminyl-[heparan sulfate](n) + 3'-phosphoadenylyl sulfate = 3-sulfo-alpha-D-glucosaminyl-[heparan sulfate](n) + adenosine 3',5'-bisphosphate + H(+). Functionally, sulfotransferase that utilizes 3'-phospho-5'-adenylyl sulfate (PAPS) to catalyze the transfer of a sulfo group to position 3 of glucosamine residues in heparan. Catalyzes the rate limiting step in the biosynthesis of heparan sulfate (HSact). This modification is a crucial step in the biosynthesis of anticoagulant heparan sulfate as it completes the structure of the antithrombin pentasaccharide binding site. Also generates GlcUA-GlcNS or IdoUA-GlcNS and IdoUA2S-GlcNH2. The substrate-specific O-sulfation generates an enzyme-modified heparan sulfate which acts as a binding receptor to Herpes simplex virus-1 (HSV-1) and permits its entry. The chain is Heparan sulfate glucosamine 3-O-sulfotransferase 5 (HS3ST5) from Homo sapiens (Human).